The sequence spans 493 residues: Gamma-aminobutyric acid receptor subunit alpha-3 (493 aa).

The signal sequence occupies residues 1–28; that stretch reads MITTQMWHFYVTRVGLLLLISILPGTTG. A disordered region spans residues 27-54; the sequence is TGQGESRRQEPGDFVKQDIGGLSPKHAP. At 29-276 the chain is on the extracellular side; it reads QGESRRQEPG…THFHLKRKIG (248 aa). A compositionally biased stretch (basic and acidic residues) spans 31–42; the sequence is ESRRQEPGDFVK. Asn63 is a glycosylation site (N-linked (GlcNAc...) asparagine). Arg119 contributes to the 4-aminobutanoate binding site. Asn163 and Asn176 each carry an N-linked (GlcNAc...) asparagine glycan. A 4-aminobutanoate-binding site is contributed by Thr182. Cys191 and Cys205 are oxidised to a cystine. Asn228 carries N-linked (GlcNAc...) asparagine glycosylation. Transmembrane regions (helical) follow at residues 277 to 298, 304 to 325, and 338 to 359; these read YFVIQTYLPCIMTVILSQVSFW, VPARTVFGVTTVLTMTTLSISA, and MDWFIAVCYAFVFSALIEFATV. Topologically, residues 360–458 are cytoplasmic; it reads NYFTKRSWAW…TYNSVSKVDK (99 aa). Ser427 bears the Phosphoserine mark. Thr428 bears the Phosphothreonine mark. A phosphoserine mark is found at Ser434 and Ser443. A helical membrane pass occupies residues 459 to 480; sequence ISRIIFPVLFAIFNLVYWATYV.

Belongs to the ligand-gated ion channel (TC 1.A.9) family. Gamma-aminobutyric acid receptor (TC 1.A.9.5) subfamily. GABRA3 sub-subfamily. As to quaternary structure, heteropentamer, formed by a combination of alpha (GABRA1-6), beta (GABRB1-3), gamma (GABRG1-3), delta (GABRD), epsilon (GABRE), rho (GABRR1-3), pi (GABRP) and theta (GABRQ) chains, each subunit exhibiting distinct physiological and pharmacological properties. Binds UBQLN1. Interacts with GPHN. In terms of tissue distribution, expressed in most brain regions. Expressed in lungs, in alveolar epithelium.

The protein resides in the postsynaptic cell membrane. It localises to the cell membrane. The enzyme catalyses chloride(in) = chloride(out). Functionally, alpha subunit of the heteropentameric ligand-gated chloride channel gated by gamma-aminobutyric acid (GABA), a major inhibitory neurotransmitter in the brain. GABA-gated chloride channels, also named GABA(A) receptors (GABAAR), consist of five subunits arranged around a central pore and contain GABA active binding site(s) located at the alpha and beta subunit interface(s). When activated by GABA, GABAARs selectively allow the flow of chloride anions across the cell membrane down their electrochemical gradient. Chloride influx into the postsynaptic neuron following GABAAR opening decreases the neuron ability to generate a new action potential, thereby reducing nerve transmission. The polypeptide is Gamma-aminobutyric acid receptor subunit alpha-3 (Rattus norvegicus (Rat)).